The sequence spans 707 residues: E3 ubiquitin-protein ligase Praja-2 (707 aa).

Over residues 1–10 (MSQYTEKEPS) the composition is skewed to basic and acidic residues. Disordered regions lie at residues 1 to 32 (MSQY…QTIT), 72 to 120 (PKEN…PSIA), and 250 to 314 (QNGQ…VRPK). An N-acetylserine modification is found at S2. 2 stretches are compositionally biased toward polar residues: residues 74–83 (ENTSGSSSLD) and 109–119 (LNQSTESSPSI). Positions 257–276 (RSSEDGVVRKRRQDDTDQGR) are enriched in basic and acidic residues. The segment covering 293 to 308 (EQNTSDRANHHGSSPE) has biased composition (polar residues). A phosphoserine mark is found at S306 and S320. Phosphoserine; by PKA is present on S339. 2 disordered regions span residues 379–405 (RVTQ…QESR) and 424–493 (EDSS…QTSL). Positions 381 to 390 (TQRETERNRV) are enriched in basic and acidic residues. Phosphothreonine; by PKA is present on T385. A compositionally biased stretch (polar residues) spans 391–401 (TSENGATASGR). At S430 the chain carries Phosphoserine. Over residues 465–481 (NDPELQSDSSGPEEENQ) the composition is skewed to acidic residues. The segment covering 482–491 (ELSLQEGEQT) has biased composition (polar residues). The interaction with PRKAR1A, PRKAR2A and PRKAR2B stretch occupies residues 530-707 (DGNNNLEDDS…PANDNAEEAP (178 aa)). Residues 549 to 569 (WSLFDGFADGLGVAEAISYVD) are mediates interaction with TBC1D31. Residues 633-674 (CPICCSEYIKDDIATELPCHHFFHKPCVSIWLQKSGTCPVCR) form an RING-type; atypical zinc finger. Over residues 685-701 (SAAASSDPDPDASPAND) the composition is skewed to low complexity. The segment at 685-707 (SAAASSDPDPDASPANDNAEEAP) is disordered.

As to quaternary structure, binds ubiquitin-conjugating enzymes (E2s). In vitro, interacts with the ubiquitin-conjugating enzyme, UBE2D2. The phosphorylated form interacts with PRKAR1A, PRKAR2A and PRKAR2B. Binds the catalytic subunits of cAMP-dependent protein kinase. Interacts with MFHAS1. Interacts with TBC1D31; the interaction is direct and recruits PJA2 to centrosomes.

It localises to the cytoplasm. The protein resides in the cell membrane. It is found in the endoplasmic reticulum membrane. The protein localises to the golgi apparatus membrane. Its subcellular location is the synapse. It localises to the postsynaptic density. The protein resides in the cytoskeleton. It is found in the microtubule organizing center. The protein localises to the centrosome. The catalysed reaction is S-ubiquitinyl-[E2 ubiquitin-conjugating enzyme]-L-cysteine + [acceptor protein]-L-lysine = [E2 ubiquitin-conjugating enzyme]-L-cysteine + N(6)-ubiquitinyl-[acceptor protein]-L-lysine.. It participates in protein modification; protein ubiquitination. Has E2-dependent E3 ubiquitin-protein ligase activity. Responsible for ubiquitination of cAMP-dependent protein kinase type I and type II-alpha/beta regulatory subunits and for targeting them for proteasomal degradation. Essential for PKA-mediated long-term memory processes. Through the ubiquitination of MFHAS1, positively regulates the TLR2 signaling pathway that leads to the activation of the downstream p38 and JNK MAP kinases and promotes the polarization of macrophages toward the pro-inflammatory M1 phenotype. Plays a role in ciliogenesis by ubiquitinating OFD1. The polypeptide is E3 ubiquitin-protein ligase Praja-2 (Pja2) (Mus musculus (Mouse)).